A 136-amino-acid polypeptide reads, in one-letter code: 5-hydroxyisourate hydrolase (136 aa).

Residues 1–20 (MKRYILATAIASLVAAPAMA) form the signal peptide. Residues His31, Arg69, and Tyr133 each coordinate substrate.

This sequence belongs to the transthyretin family. 5-hydroxyisourate hydrolase subfamily. Homotetramer.

It is found in the periplasm. It catalyses the reaction 5-hydroxyisourate + H2O = 5-hydroxy-2-oxo-4-ureido-2,5-dihydro-1H-imidazole-5-carboxylate + H(+). Catalyzes the hydrolysis of 5-hydroxyisourate (HIU) to 2-oxo-4-hydroxy-4-carboxy-5-ureidoimidazoline (OHCU). This is 5-hydroxyisourate hydrolase (hiuH) from Salmonella typhi.